A 256-amino-acid chain; its full sequence is 7-cyano-7-deazaguanine synthase (256 aa).

A disordered region spans residues M1 to S22. Residues A8 to S22 show a composition bias toward polar residues. L30–L40 serves as a coordination point for ATP. Residues C220, C230, C233, and C236 each contribute to the Zn(2+) site.

It belongs to the QueC family. Requires Zn(2+) as cofactor.

It carries out the reaction 7-carboxy-7-deazaguanine + NH4(+) + ATP = 7-cyano-7-deazaguanine + ADP + phosphate + H2O + H(+). It participates in purine metabolism; 7-cyano-7-deazaguanine biosynthesis. In terms of biological role, catalyzes the ATP-dependent conversion of 7-carboxy-7-deazaguanine (CDG) to 7-cyano-7-deazaguanine (preQ(0)). This chain is 7-cyano-7-deazaguanine synthase, found in Psychrobacter sp. (strain PRwf-1).